The chain runs to 142 residues: Transcriptional regulator MraZ (142 aa).

2 SpoVT-AbrB domains span residues 5–47 (EYNH…PMEE) and 76–119 (ANEI…SREK).

This sequence belongs to the MraZ family. As to quaternary structure, forms oligomers.

It is found in the cytoplasm. The protein resides in the nucleoid. The sequence is that of Transcriptional regulator MraZ from Clostridium tetani (strain Massachusetts / E88).